We begin with the raw amino-acid sequence, 213 residues long: Large ribosomal subunit protein uL4 (213 aa).

The tract at residues 41 to 75 (GTASTKTRAEVSRSGKKMYSQKGTGNARHGDRSVP) is disordered.

Belongs to the universal ribosomal protein uL4 family. Part of the 50S ribosomal subunit.

In terms of biological role, one of the primary rRNA binding proteins, this protein initially binds near the 5'-end of the 23S rRNA. It is important during the early stages of 50S assembly. It makes multiple contacts with different domains of the 23S rRNA in the assembled 50S subunit and ribosome. Its function is as follows. Forms part of the polypeptide exit tunnel. This is Large ribosomal subunit protein uL4 from Deinococcus geothermalis (strain DSM 11300 / CIP 105573 / AG-3a).